We begin with the raw amino-acid sequence, 619 residues long: Phosphomethylpyrimidine synthase (619 aa).

A compositionally biased stretch (polar residues) spans 1–11; that stretch reads MHEQRSLTMNA. The interval 1–25 is disordered; sequence MHEQRSLTMNALTPAVSTGPLPASR. Substrate-binding positions include Asn-220, Met-249, Tyr-278, His-314, 334–336, 375–378, and Glu-414; these read SRG and DGLR. His-418 contacts Zn(2+). Tyr-441 lines the substrate pocket. Zn(2+) is bound at residue His-482. Residues Cys-562, Cys-565, and Cys-570 each contribute to the [4Fe-4S] cluster site.

This sequence belongs to the ThiC family. Homodimer. [4Fe-4S] cluster serves as cofactor.

The catalysed reaction is 5-amino-1-(5-phospho-beta-D-ribosyl)imidazole + S-adenosyl-L-methionine = 4-amino-2-methyl-5-(phosphooxymethyl)pyrimidine + CO + 5'-deoxyadenosine + formate + L-methionine + 3 H(+). It participates in cofactor biosynthesis; thiamine diphosphate biosynthesis. Its function is as follows. Catalyzes the synthesis of the hydroxymethylpyrimidine phosphate (HMP-P) moiety of thiamine from aminoimidazole ribotide (AIR) in a radical S-adenosyl-L-methionine (SAM)-dependent reaction. This is Phosphomethylpyrimidine synthase from Mesorhizobium japonicum (strain LMG 29417 / CECT 9101 / MAFF 303099) (Mesorhizobium loti (strain MAFF 303099)).